We begin with the raw amino-acid sequence, 74 residues long: Brevinin-2Ta (74 aa).

The first 22 residues, 1-22, serve as a signal peptide directing secretion; that stretch reads MFTMKKSLLLFFFLGTISLSLC. A propeptide spanning residues 23 to 41 is cleaved from the precursor; the sequence is QEERNADEDDGEMTEEEKR. A disulfide bond links Cys68 and Cys74.

It belongs to the frog skin active peptide (FSAP) family. Brevinin subfamily. Expressed by the skin glands.

It is found in the secreted. Functionally, antimicrobial peptide. This Rana temporaria (European common frog) protein is Brevinin-2Ta.